The following is a 180-amino-acid chain: Ribulose bisphosphate carboxylase small subunit, chloroplastic 5 (180 aa).

The N-terminal 56 residues, 1 to 56 (MASSVMSSAAVATRGNGAQASMVAPFTGLKSTASFPVSRKQNLDITSIASNGGRVR), are a transit peptide targeting the chloroplast.

Belongs to the RuBisCO small chain family. Heterohexadecamer of 8 large and 8 small subunits.

The protein localises to the plastid. It is found in the chloroplast. Its function is as follows. RuBisCO catalyzes two reactions: the carboxylation of D-ribulose 1,5-bisphosphate, the primary event in carbon dioxide fixation, as well as the oxidative fragmentation of the pentose substrate. Both reactions occur simultaneously and in competition at the same active site. Although the small subunit is not catalytic it is essential for maximal activity. This is Ribulose bisphosphate carboxylase small subunit, chloroplastic 5 from Solanum tuberosum (Potato).